Reading from the N-terminus, the 252-residue chain is Serine/threonine phosphatase stp (252 aa).

Residues 1-18 show a composition bias toward basic and acidic residues; the sequence is MHAEFRTDRGRIRHHNED. Residues 1–23 are disordered; sequence MHAEFRTDRGRIRHHNEDNGGVF. Residues 2–242 form the PPM-type phosphatase domain; sequence HAEFRTDRGR…DNITVLLVER (241 aa). The Mn(2+) site is built by aspartate 36, glycine 37, aspartate 194, and aspartate 233.

This sequence belongs to the PP2C family. Mn(2+) is required as a cofactor.

The protein localises to the cytoplasm. The protein resides in the membrane. The enzyme catalyses O-phospho-L-seryl-[protein] + H2O = L-seryl-[protein] + phosphate. It carries out the reaction O-phospho-L-threonyl-[protein] + H2O = L-threonyl-[protein] + phosphate. Protein phosphatase that dephosphorylates EF-Tu. The chain is Serine/threonine phosphatase stp (stp) from Listeria welshimeri serovar 6b (strain ATCC 35897 / DSM 20650 / CCUG 15529 / CIP 8149 / NCTC 11857 / SLCC 5334 / V8).